A 136-amino-acid chain; its full sequence is ATP synthase epsilon chain (136 aa).

This sequence belongs to the ATPase epsilon chain family. F-type ATPases have 2 components, CF(1) - the catalytic core - and CF(0) - the membrane proton channel. CF(1) has five subunits: alpha(3), beta(3), gamma(1), delta(1), epsilon(1). CF(0) has three main subunits: a, b and c.

The protein resides in the cell inner membrane. Produces ATP from ADP in the presence of a proton gradient across the membrane. This chain is ATP synthase epsilon chain, found in Afipia carboxidovorans (strain ATCC 49405 / DSM 1227 / KCTC 32145 / OM5) (Oligotropha carboxidovorans).